A 232-amino-acid chain; its full sequence is Histone H1A (232 aa).

Over residues 1–18 (MSDPAVEVTPAVPVASPA) the composition is skewed to low complexity. Disordered regions lie at residues 1-42 (MSDP…THLP) and 98-232 (LQTK…AKKA). An H15 domain is found at 39-113 (THLPVSDMVV…GASGSFKLPA (75 aa)). Composition is skewed to basic residues over residues 131-141 (KPKKAAAPKPK), 147-173 (KVKK…KTTK), 181-214 (AAKK…KAKK), and 222-232 (KAAKKPAAKKA).

Belongs to the histone H1/H5 family.

It is found in the nucleus. The protein localises to the chromosome. Functionally, histones H1 are necessary for the condensation of nucleosome chains into higher-order structures. The protein is Histone H1A of Chironomus tentans (Midge).